Reading from the N-terminus, the 67-residue chain is Conotoxin TxMMSK-01 (67 aa).

Positions 1 to 20 are cleaved as a signal peptide; sequence MMSKLGVLLITCLLLFPLTA. Positions 21 to 53 are excised as a propeptide; sequence VPLDGDQPADQPAERLQDDISSENHPFFDPVKR. 3 disulfides stabilise this stretch: C54/C66, C55/C62, and C59/C65. The residue at position 64 (P64) is a 4-hydroxyproline. At C66 the chain carries Cysteine amide.

Belongs to the conotoxin M superfamily. In terms of tissue distribution, expressed by the venom duct.

The protein resides in the secreted. The protein is Conotoxin TxMMSK-01 of Conus textile (Cloth-of-gold cone).